We begin with the raw amino-acid sequence, 355 residues long: Oligopeptide transport ATP-binding protein AmiE (355 aa).

In terms of domain architecture, ABC transporter spans 9–260 (LTARDIVVEF…PRHPYTWSLL (252 aa)). 45–52 (GESGSGKS) serves as a coordination point for ATP.

Belongs to the ABC transporter superfamily.

The protein resides in the cell membrane. In terms of biological role, part of the binding-protein-dependent transport system for oligopeptides. Probably responsible for energy coupling to the transport system. This Streptococcus pneumoniae serotype 4 (strain ATCC BAA-334 / TIGR4) protein is Oligopeptide transport ATP-binding protein AmiE (amiE).